A 239-amino-acid polypeptide reads, in one-letter code: Serine protease SplC (239 aa).

Positions 1–36 (MNKNIVIKSMAALAILTSATGINAAVVEETQQIANA) are cleaved as a signal peptide. Catalysis depends on charge relay system residues His75, Asp113, and Ser193.

The protein belongs to the peptidase S1B family.

It is found in the secreted. This Staphylococcus aureus (strain MSSA476) protein is Serine protease SplC (splC).